We begin with the raw amino-acid sequence, 144 residues long: Maximins 4/H3 type 1 (144 aa).

Residues 1 to 18 (MNFKYIIAVSFFIASAYA) form the signal peptide. The propeptide occupies 19 to 43 (RSEEKDVQSLSQRDVLEEESLREIR). Asn-70 is subject to Asparagine amide. Positions 74–123 (TAEDHEVMKRLEAVMRDLDSLDHPEEASERETRGFNQEEIANLFTKKEKR) are excised as a propeptide. Ile-143 bears the Isoleucine amide mark.

Belongs to the bombinin family. As to expression, expressed by the skin glands.

The protein resides in the secreted. Its function is as follows. Maximin-4 shows antibacterial activity against both Gram-positive and Gram-negative bacteria. It also shows antimicrobial activity against the fungus C.albicans, but not against A.flavus nor P.uticale. It has little hemolytic activity. It does not possess a significant cytotoxicity against tumor cell lines. It does not possess a significant anti-HIV activity. Functionally, maximin-H3 shows antibacterial activity against both Gram-positive and Gram-negative bacteria. It also shows antimicrobial activity against the fungus C.albicans. Shows strong hemolytic activity. The protein is Maximins 4/H3 type 1 of Bombina maxima (Giant fire-bellied toad).